The primary structure comprises 407 residues: Bifunctional enzyme IspD/IspF (407 aa).

The 2-C-methyl-D-erythritol 4-phosphate cytidylyltransferase stretch occupies residues Met1–Val247. The interval Arg248–Gln407 is 2-C-methyl-D-erythritol 2,4-cyclodiphosphate synthase. Positions 254 and 256 each coordinate a divalent metal cation. 4-CDP-2-C-methyl-D-erythritol 2-phosphate-binding positions include Asp254–His256 and His280–Ser281. His288 is an a divalent metal cation binding site. 4-CDP-2-C-methyl-D-erythritol 2-phosphate contacts are provided by residues Asp302–Gly304, Thr378–Glu381, Phe385, and Arg388.

In the N-terminal section; belongs to the IspD/TarI cytidylyltransferase family. IspD subfamily. It in the C-terminal section; belongs to the IspF family. A divalent metal cation is required as a cofactor.

The catalysed reaction is 2-C-methyl-D-erythritol 4-phosphate + CTP + H(+) = 4-CDP-2-C-methyl-D-erythritol + diphosphate. The enzyme catalyses 4-CDP-2-C-methyl-D-erythritol 2-phosphate = 2-C-methyl-D-erythritol 2,4-cyclic diphosphate + CMP. It functions in the pathway isoprenoid biosynthesis; isopentenyl diphosphate biosynthesis via DXP pathway; isopentenyl diphosphate from 1-deoxy-D-xylulose 5-phosphate: step 2/6. It participates in isoprenoid biosynthesis; isopentenyl diphosphate biosynthesis via DXP pathway; isopentenyl diphosphate from 1-deoxy-D-xylulose 5-phosphate: step 4/6. Its function is as follows. Bifunctional enzyme that catalyzes the formation of 4-diphosphocytidyl-2-C-methyl-D-erythritol from CTP and 2-C-methyl-D-erythritol 4-phosphate (MEP) (IspD), and catalyzes the conversion of 4-diphosphocytidyl-2-C-methyl-D-erythritol 2-phosphate (CDP-ME2P) to 2-C-methyl-D-erythritol 2,4-cyclodiphosphate (ME-CPP) with a corresponding release of cytidine 5-monophosphate (CMP) (IspF). This chain is Bifunctional enzyme IspD/IspF, found in Allorhizobium ampelinum (strain ATCC BAA-846 / DSM 112012 / S4) (Agrobacterium vitis (strain S4)).